Here is a 298-residue protein sequence, read N- to C-terminus: Acetylglutamate kinase (298 aa).

Substrate-binding positions include 69–70 (GG), arginine 91, and asparagine 196.

The protein belongs to the acetylglutamate kinase family. ArgB subfamily.

It is found in the cytoplasm. The catalysed reaction is N-acetyl-L-glutamate + ATP = N-acetyl-L-glutamyl 5-phosphate + ADP. The protein operates within amino-acid biosynthesis; L-arginine biosynthesis; N(2)-acetyl-L-ornithine from L-glutamate: step 2/4. Catalyzes the ATP-dependent phosphorylation of N-acetyl-L-glutamate. The polypeptide is Acetylglutamate kinase (Nitrobacter hamburgensis (strain DSM 10229 / NCIMB 13809 / X14)).